Consider the following 587-residue polypeptide: Protein NRT1/ PTR FAMILY 2.9 (587 aa).

12 helical membrane passes run 35–55, 65–85, 94–114, 135–155, 181–201, 209–229, 325–345, 368–388, 412–432, 457–477, 493–513, and 540–560; these read FEKL…TTVF, VVNI…FLCD, LSFA…TAVI, IGQI…AGGI, FFNW…TLIV, WSIG…IFFA, CVIR…AYIQ, IPAG…IPIY, VGAG…VEQY, GMWL…AGVG, FAGS…TFLL, and YFYF…LLVS.

Belongs to the major facilitator superfamily. Proton-dependent oligopeptide transporter (POT/PTR) (TC 2.A.17) family. In terms of tissue distribution, expressed in roots, stems and major veins of the leaves. Detected in the companion cells of the root phloem.

Its subcellular location is the cell membrane. In terms of biological role, low-affinity nitrate transporter facilitating nitrate loading into root phloem. Not involved in dipeptides transport, but has a weak glucosinolate transport activity. The chain is Protein NRT1/ PTR FAMILY 2.9 (NPF2.9) from Arabidopsis thaliana (Mouse-ear cress).